The primary structure comprises 206 residues: Ras-related protein Rab7 (206 aa).

GTP-binding positions include 15 to 22 (GDSGVGKT), 63 to 67 (DTAGQ), and 125 to 128 (NKID). 2 S-geranylgeranyl cysteine lipidation sites follow: Cys204 and Cys206. Cys206 is subject to Cysteine methyl ester.

It belongs to the small GTPase superfamily. Rab family.

The protein localises to the cell membrane. Its function is as follows. Protein transport. Probably involved in vesicular traffic. This chain is Ras-related protein Rab7, found in Pisum sativum (Garden pea).